Consider the following 214-residue polypeptide: Large ribosomal subunit protein uL3 (214 aa).

A disordered region spans residues 131-155; the sequence is GAQRTSHGNSRSHRVPGSIGMAQDP. Gln153 bears the N5-methylglutamine mark.

This sequence belongs to the universal ribosomal protein uL3 family. In terms of assembly, part of the 50S ribosomal subunit. Forms a cluster with proteins L14 and L19. In terms of processing, methylated by PrmB.

Functionally, one of the primary rRNA binding proteins, it binds directly near the 3'-end of the 23S rRNA, where it nucleates assembly of the 50S subunit. This is Large ribosomal subunit protein uL3 from Neisseria gonorrhoeae (strain ATCC 700825 / FA 1090).